Consider the following 446-residue polypeptide: Divalent metal cation transporter MntH (446 aa).

11 consecutive transmembrane segments (helical) span residues 32 to 52, 59 to 79, 107 to 127, 139 to 159, 168 to 188, 205 to 225, 264 to 284, 303 to 323, 355 to 375, 381 to 401, and 420 to 440; these read LAFL…GNWI, AQFG…AMLL, AIIF…AEVI, IPLI…LFIM, AIVG…VYIS, IIAN…TIMP, SIAF…FYGV, PVLG…ALLA, LVTR…FRGN, QLLV…LIPL, and VNIC…YLII.

It belongs to the NRAMP family.

The protein resides in the cell membrane. Functionally, h(+)-stimulated, divalent metal cation uptake system. The protein is Divalent metal cation transporter MntH of Staphylococcus haemolyticus (strain JCSC1435).